Reading from the N-terminus, the 85-residue chain is Small ribosomal subunit protein bS16 (85 aa).

It belongs to the bacterial ribosomal protein bS16 family.

This is Small ribosomal subunit protein bS16 from Clostridium kluyveri (strain NBRC 12016).